Consider the following 265-residue polypeptide: Dimethylsulfide dehydrogenase subunit gamma (265 aa).

The first 25 residues, 1–25 (MPGFRFLLAATAAFLATSPALPLSA), serve as a signal peptide directing secretion. Residues H81 and M147 each coordinate heme b.

In terms of assembly, heterotrimer of alpha, beta and gamma subunits. The cofactor is heme b.

The protein localises to the periplasm. Functionally, may transfer electrons to the iron-sulfur centers of DdhB. This Rhodovulum sulfidophilum (Rhodobacter sulfidophilus) protein is Dimethylsulfide dehydrogenase subunit gamma (ddhC).